Reading from the N-terminus, the 422-residue chain is Phytoene synthase, chloroplastic (422 aa).

A chloroplast-targeting transit peptide spans 1–83 (MSLASSLVVS…GSVIVASMVA (83 aa)).

Belongs to the phytoene/squalene synthase family. Monomer.

The protein resides in the plastid. Its subcellular location is the chloroplast. It carries out the reaction 2 (2E,6E,10E)-geranylgeranyl diphosphate = 15-cis-phytoene + 2 diphosphate. It participates in carotenoid biosynthesis; phytoene biosynthesis; all-trans-phytoene from geranylgeranyl diphosphate: step 1/1. In terms of biological role, catalyzes the reaction from prephytoene diphosphate to phytoene. This Cucumis melo (Muskmelon) protein is Phytoene synthase, chloroplastic (PSY).